A 254-amino-acid polypeptide reads, in one-letter code: 5'-nucleotidase SurE (254 aa).

The a divalent metal cation site is built by Asp8, Asp9, Ser38, and Asn91.

This sequence belongs to the SurE nucleotidase family. The cofactor is a divalent metal cation.

Its subcellular location is the cytoplasm. It catalyses the reaction a ribonucleoside 5'-phosphate + H2O = a ribonucleoside + phosphate. In terms of biological role, nucleotidase that shows phosphatase activity on nucleoside 5'-monophosphates. The sequence is that of 5'-nucleotidase SurE from Anaeromyxobacter sp. (strain Fw109-5).